The following is a 212-amino-acid chain: 3-demethoxyubiquinol 3-hydroxylase (212 aa).

Fe cation contacts are provided by Glu61, Glu91, His94, Glu143, Glu175, and His178.

Belongs to the COQ7 family. Requires Fe cation as cofactor.

The protein localises to the cell membrane. The enzyme catalyses a 5-methoxy-2-methyl-3-(all-trans-polyprenyl)benzene-1,4-diol + AH2 + O2 = a 3-demethylubiquinol + A + H2O. It functions in the pathway cofactor biosynthesis; ubiquinone biosynthesis. Its function is as follows. Catalyzes the hydroxylation of 2-nonaprenyl-3-methyl-6-methoxy-1,4-benzoquinol during ubiquinone biosynthesis. The protein is 3-demethoxyubiquinol 3-hydroxylase of Methylibium petroleiphilum (strain ATCC BAA-1232 / LMG 22953 / PM1).